Consider the following 389-residue polypeptide: Lipid-A-disaccharide synthase (389 aa).

It belongs to the LpxB family.

The catalysed reaction is a lipid X + a UDP-2-N,3-O-bis[(3R)-3-hydroxyacyl]-alpha-D-glucosamine = a lipid A disaccharide + UDP + H(+). It functions in the pathway bacterial outer membrane biogenesis; LPS lipid A biosynthesis. Its function is as follows. Condensation of UDP-2,3-diacylglucosamine and 2,3-diacylglucosamine-1-phosphate to form lipid A disaccharide, a precursor of lipid A, a phosphorylated glycolipid that anchors the lipopolysaccharide to the outer membrane of the cell. The sequence is that of Lipid-A-disaccharide synthase from Paraburkholderia phytofirmans (strain DSM 17436 / LMG 22146 / PsJN) (Burkholderia phytofirmans).